We begin with the raw amino-acid sequence, 644 residues long: Protein cueball (644 aa).

The N-terminal stretch at 1-26 (MIRIRFGMDVLLVVLLATCLLTPAHG) is a signal peptide. At 27–531 (TPLEWDFAVT…VCLTPRVWTS (505 aa)) the chain is on the extracellular side. N-linked (GlcNAc...) asparagine glycosylation is found at Asn-82 and Asn-108. LDL-receptor class B repeat units follow at residues 121–166 (MNLF…DVCR), 167–211 (RKLY…DQLS), and 212–257 (DRLF…TNDA). 2 N-linked (GlcNAc...) asparagine glycosylation sites follow: Asn-175 and Asn-190. An N-linked (GlcNAc...) asparagine glycan is attached at Asn-313. EGF-like domains lie at 398–430 (EIRECHNYCVHGTCQMSELAYPKCYCQPGFTGE) and 433–471 (ELSVCSGLCLNGGHCRVSKDENEAPSCECPAKFGGARCE). 5 disulfide bridges follow: Cys-402–Cys-411, Cys-406–Cys-421, Cys-437–Cys-447, Cys-441–Cys-459, and Cys-461–Cys-470. 2 N-linked (GlcNAc...) asparagine glycosylation sites follow: Asn-473 and Asn-508. Residues 532–552 (SVIIILVVGIVSSLLLVAVIV) form a helical membrane-spanning segment. Residues 553-644 (HGIRRLYKPK…LIHNMEDDLY (92 aa)) are Cytoplasmic-facing.

It belongs to the cueball family.

It localises to the cell membrane. Functionally, has a role in spermatogenesis and oogenesis. The polypeptide is Protein cueball (Drosophila simulans (Fruit fly)).